The sequence spans 150 residues: Aspartate 1-decarboxylase 2 (150 aa).

Catalysis depends on Ser-24, which acts as the Schiff-base intermediate with substrate; via pyruvic acid. Residue Ser-24 is modified to Pyruvic acid (Ser). Thr-56 is a substrate binding site. The Proton donor role is filled by Tyr-57. Residue Gly-72–Ala-74 participates in substrate binding.

It belongs to the PanD family. Heterooctamer of four alpha and four beta subunits. Pyruvate is required as a cofactor. Post-translationally, is synthesized initially as an inactive proenzyme, which is activated by self-cleavage at a specific serine bond to produce a beta-subunit with a hydroxyl group at its C-terminus and an alpha-subunit with a pyruvoyl group at its N-terminus.

The protein localises to the cytoplasm. The catalysed reaction is L-aspartate + H(+) = beta-alanine + CO2. It functions in the pathway cofactor biosynthesis; (R)-pantothenate biosynthesis; beta-alanine from L-aspartate: step 1/1. Its function is as follows. Catalyzes the pyruvoyl-dependent decarboxylation of aspartate to produce beta-alanine. This is Aspartate 1-decarboxylase 2 from Mesorhizobium japonicum (strain LMG 29417 / CECT 9101 / MAFF 303099) (Mesorhizobium loti (strain MAFF 303099)).